Reading from the N-terminus, the 306-residue chain is ATP synthase gamma chain (306 aa).

It belongs to the ATPase gamma chain family. F-type ATPases have 2 components, CF(1) - the catalytic core - and CF(0) - the membrane proton channel. CF(1) has five subunits: alpha(3), beta(3), gamma(1), delta(1), epsilon(1). CF(0) has three main subunits: a, b and c.

It is found in the cell membrane. Produces ATP from ADP in the presence of a proton gradient across the membrane. The gamma chain is believed to be important in regulating ATPase activity and the flow of protons through the CF(0) complex. This is ATP synthase gamma chain from Bifidobacterium animalis subsp. lactis (strain AD011).